Consider the following 236-residue polypeptide: Transcription repressor MYB6 (236 aa).

2 HTH myb-type domains span residues 9 to 61 and 62 to 116; these read KAHT…INYL and RPDL…KRKL. 2 DNA-binding regions (H-T-H motif) span residues 37–61 and 89–112; these read WRSL…INYL and WSLI…NTHI. The segment at 159–181 is disordered; it reads PKTENSSDNGASTSGTTTDEDLR. Polar residues predominate over residues 162–175; the sequence is ENSSDNGASTSGTT.

In terms of assembly, interacts with BHLH012/MYC1 and BHLH042/TT8. In terms of tissue distribution, expressed in roots, stems, flower buds, and siliques.

The protein localises to the nucleus. The protein is Transcription repressor MYB6 (MYB6) of Arabidopsis thaliana (Mouse-ear cress).